The chain runs to 113 residues: Large ribosomal subunit protein uL24 (113 aa).

It belongs to the universal ribosomal protein uL24 family. Part of the 50S ribosomal subunit.

Its function is as follows. One of two assembly initiator proteins, it binds directly to the 5'-end of the 23S rRNA, where it nucleates assembly of the 50S subunit. Functionally, one of the proteins that surrounds the polypeptide exit tunnel on the outside of the subunit. The polypeptide is Large ribosomal subunit protein uL24 (rplX) (Fusobacterium nucleatum subsp. nucleatum (strain ATCC 25586 / DSM 15643 / BCRC 10681 / CIP 101130 / JCM 8532 / KCTC 2640 / LMG 13131 / VPI 4355)).